The chain runs to 624 residues: Prickle planar cell polarity protein 3 (624 aa).

Over residues M1–G12 the composition is skewed to basic residues. The disordered stretch occupies residues M1 to P26. Residues S74–T182 form the PET domain. LIM zinc-binding domains follow at residues A184 to P249, R250 to E309, and Y310 to T373. Residues E371–R617 are disordered. Residues S383–S409 show a composition bias toward low complexity. The segment covering P447–A458 has biased composition (pro residues). A phosphoserine mark is found at S475 and S491. Positions S509–H541 are enriched in basic residues. Over residues L545–E564 the composition is skewed to low complexity. The segment covering R587–A601 has biased composition (polar residues).

The protein belongs to the prickle / espinas / testin family. As to quaternary structure, interacts with VANGL2 via its C-terminus. The VANGL2-dependent membrane recruitment of PRICKLE3 is a prerequisite for its polarization. Interacts with WTIP. WTIP is involved in the recruitment of PRICKLE3 to the basal body. Interacts with MT-ATP8, a component of the mitochondrial complex V. In terms of tissue distribution, widely expressed.

It is found in the cytoplasm. The protein resides in the cell membrane. Its subcellular location is the mitochondrion. In terms of biological role, involved in the planar cell polarity (PCP) pathway that is essential for the polarization of epithelial cells during morphogenetic processes, including gastrulation and neurulation. PCP is maintained by two molecular modules, the global and the core modules, PRICKLE3 being part of the core module. Distinct complexes of the core module segregate to opposite sides of the cell, where they interact with the opposite complex in the neighboring cell at or near the adherents junctions. Involved in the organization of the basal body. Involved in cilia growth and positioning. Required for proper assembly, stability, and function of mitochondrial membrane ATP synthase (mitochondrial complex V). The protein is Prickle planar cell polarity protein 3 of Mus musculus (Mouse).